Consider the following 68-residue polypeptide: Pantinin-3 (68 aa).

The signal sequence occupies residues 1 to 23 (MKTQFAILLIALVLFQLLSQSDA). The residue at position 36 (Leu-36) is a Leucine amide. The propeptide occupies 40 to 68 (GLNELDNLDELFDGEISQADIDFLKELMS).

The protein belongs to the non-disulfide-bridged peptide (NDBP) superfamily. Short antimicrobial peptide (group 4) family. Expressed by the venom gland.

It localises to the secreted. It is found in the target cell membrane. Functionally, amphipathic peptide that possesses relatively strong activities against Gram-positive bacteria and a fungus, but has very weak antimicrobial activities against Gram-negative bacteria. Also exhibits mild hemolytic activities against human erythrocytes (16 uM induce 70% of hemolysis). Furthermore, this peptide potently inhibits the growth of vancomycin-resistant Enterococcus (VRE) S13, a pathogen that can cause a number of human infections. Minimal inhibitory concentration (MIC) are the following: 16 uM against S.aureus, 6 uM against B.magaterium, 8 uM against M.luteus, 4 uM against VRE, 12 uM against methicillin-resistant S.aureus, 36 uM against E.coli, &gt;87 uM against P.putida, 87 uM against K.oxytoca, &gt;87 uM against E.cloacae, 84 uM against S.enterica and 17 uM against the fungus C.tropicalis. The chain is Pantinin-3 from Pandinus imperator (Emperor scorpion).